The following is a 167-amino-acid chain: NADH-quinone oxidoreductase subunit B 1 (167 aa).

[4Fe-4S] cluster is bound by residues Cys38, Cys39, Cys104, and Cys133.

The protein belongs to the complex I 20 kDa subunit family. NDH-1 is composed of 14 different subunits. Subunits NuoB, C, D, E, F, and G constitute the peripheral sector of the complex. The cofactor is [4Fe-4S] cluster.

Its subcellular location is the cell membrane. It catalyses the reaction a quinone + NADH + 5 H(+)(in) = a quinol + NAD(+) + 4 H(+)(out). NDH-1 shuttles electrons from NADH, via FMN and iron-sulfur (Fe-S) centers, to quinones in the respiratory chain. The immediate electron acceptor for the enzyme in this species is believed to be ubiquinone. Couples the redox reaction to proton translocation (for every two electrons transferred, four hydrogen ions are translocated across the cytoplasmic membrane), and thus conserves the redox energy in a proton gradient. The protein is NADH-quinone oxidoreductase subunit B 1 of Roseiflexus castenholzii (strain DSM 13941 / HLO8).